A 187-amino-acid chain; its full sequence is Interferon beta (187 aa).

The N-terminal stretch at 1–21 is a signal peptide; it reads MTNKCLLQIALLLCFSTTALS. Tyr-24 is modified (phosphotyrosine). A disulfide bridge connects residues Cys-52 and Cys-162. A glycan (N-linked (GlcNAc...) asparagine) is linked at Asn-101.

This sequence belongs to the alpha/beta interferon family. Monomer.

It is found in the secreted. Functionally, type I interferon cytokine that plays a key role in the innate immune response to infection, developing tumors and other inflammatory stimuli. Signals via binding to high-affinity (IFNAR2) and low-affinity (IFNAR1) heterodimeric receptor, activating the canonical Jak-STAT signaling pathway resulting in transcriptional activation or repression of interferon-regulated genes that encode the effectors of the interferon response, such as antiviral proteins, regulators of cell proliferation and differentiation, and immunoregulatory proteins. Signals mostly via binding to a IFNAR1-IFNAR2 heterodimeric receptor, but can also function with IFNAR1 alone and independently of Jak-STAT pathways. Elicits a wide variety of responses, including antiviral and antibacterial activities, and can regulate the development of B-cells, myelopoiesis and lipopolysaccharide (LPS)-inducible production of tumor necrosis factor. Plays a role in neuronal homeostasis by regulating dopamine turnover and protecting dopaminergic neurons: acts by promoting neuronal autophagy and alpha-synuclein clearance, thereby preventing dopaminergic neuron loss. IFNB1 is more potent than interferon-alpha (IFN-alpha) in inducing the apoptotic and antiproliferative pathways required for control of tumor cell growth. The chain is Interferon beta (IFNB1) from Macaca fascicularis (Crab-eating macaque).